We begin with the raw amino-acid sequence, 159 residues long: Flagellar assembly factor FliW (159 aa).

The protein belongs to the FliW family. In terms of assembly, interacts with translational regulator CsrA and flagellin(s).

It is found in the cytoplasm. In terms of biological role, acts as an anti-CsrA protein, binds CsrA and prevents it from repressing translation of its target genes, one of which is flagellin. Binds to flagellin and participates in the assembly of the flagellum. The polypeptide is Flagellar assembly factor FliW (Geobacter sulfurreducens (strain ATCC 51573 / DSM 12127 / PCA)).